We begin with the raw amino-acid sequence, 21 residues long: Peptide PGLa-B2 (21 aa).

Leucine 21 is modified (leucine amide).

Expressed by the skin glands.

The protein resides in the secreted. Functionally, has antimicrobial activity against Gram-negative bacterium E.coli ATCC 25922 (MIC=25 uM), Gram-positive bacterium S.auerus ATCC 25923 (MIC=50 uM) and against fungus C.albicans ATCC 90028 (MIC=25 uM). Has some hemolytic activity against human erythrocytes at high concentration. This chain is Peptide PGLa-B2, found in Xenopus borealis (Kenyan clawed frog).